Reading from the N-terminus, the 127-residue chain is Competence protein ComGF (127 aa).

The transformation pili are flexible filaments, consisting mainly of the major pilin ComGC and smaller amounts of the minor pilins, including at least ComGD, ComGF and ComGG. Interacts with ComGD. Interacts with ComGG.

Its subcellular location is the cell membrane. The protein localises to the fimbrium. In terms of biological role, required for formation of the type IV-like pilus (T4P) that plays a role in transformation. Involved in transformation. Transformation pili are dynamically extended and retracted, perhaps thereby promoting DNA uptake and transformation. Required for transformation and DNA binding. In Bacillus subtilis (strain 168), this protein is Competence protein ComGF (comGF).